The primary structure comprises 206 residues: uncharacterized protein (206 aa).

Residues 1-17 (MKGKILFALFLSAGVIA) form the signal peptide. A lipid anchor (N-palmitoyl cysteine) is attached at Cys-18. The S-diacylglycerol cysteine moiety is linked to residue Cys-18. Residues 21–58 (ASQAAKQQEVKVAKAETKTKKKESKAEKFRKALAAQDK) adopt a coiled-coil conformation. In terms of domain architecture, Cytochrome c spans 97–201 (GDWRKGESLA…DIVAYLHDPE (105 aa)). Cys-127, Cys-130, and His-131 together coordinate heme c.

The protein localises to the cell membrane. This is an uncharacterized protein from Aquifex aeolicus (strain VF5).